Reading from the N-terminus, the 496-residue chain is Zinc finger protein PLAGL2 (496 aa).

6 consecutive C2H2-type zinc fingers follow at residues 68-92 (YSCP…MATH), 98-120 (HQCM…LQTH), 127-149 (LHCS…LAMH), 156-178 (LSCK…LKAH), 191-213 (HPCD…LVVH), and 219-242 (FLCQ…KKSH).

The protein belongs to the krueppel C2H2-type zinc-finger protein family.

The protein resides in the nucleus. In terms of biological role, shows weak transcriptional activatory activity. The sequence is that of Zinc finger protein PLAGL2 (PLAGL2) from Homo sapiens (Human).